The following is a 395-amino-acid chain: Protein BTN1 (395 aa).

Residues 1 to 31 (MQLEPAHLVYAAFWTFGLVNNVLYVVILTAA) form the signal peptide. 10 helical membrane passes run 43 to 63 (VVLLADVLPSFLIKLAAPFFI), 74 to 94 (LLVGLSTVGMMSVSLASPLFL), 96 to 116 (LVGVVLASFSSGLGEVTFLQL), 134 to 154 (GAGLVGSGLFMLLTTVLGVSV), 158 to 178 (LLVFAFFPLAFLGVYFYLLPP), 222 to 242 (PLVMPYMLPLFLVYFSEYTIN), 261 to 278 (FRDVYVTYGTLYQLGVFI), 291 to 311 (IMIPSVLQFANLVFCIAQSMS), 313 to 333 (ILPNVWLVFILIFYEGLLGGA), and 355 to 375 (LGSVGMSDSAGIVLAGLVSLW).

The protein belongs to the battenin family.

The protein localises to the vacuole membrane. Involved in vacuolar transport and vacuole pH homeostasis. Also required for cytokinesis. The chain is Protein BTN1 (BTN1) from Yarrowia lipolytica (strain CLIB 122 / E 150) (Yeast).